Reading from the N-terminus, the 55-residue chain is Large ribosomal subunit protein bL32 (55 aa).

Positions Met1–Gln19 are enriched in basic residues. A disordered region spans residues Met1–Lys21.

Belongs to the bacterial ribosomal protein bL32 family.

The protein is Large ribosomal subunit protein bL32 of Corynebacterium kroppenstedtii (strain DSM 44385 / JCM 11950 / CIP 105744 / CCUG 35717).